Reading from the N-terminus, the 383-residue chain is Deoxyguanosinetriphosphate triphosphohydrolase-like protein (383 aa).

In terms of domain architecture, HD spans 62–198; sequence RLTHSLEVST…ASLADDISYI (137 aa).

This sequence belongs to the dGTPase family. Type 2 subfamily.

This Rickettsia prowazekii (strain Madrid E) protein is Deoxyguanosinetriphosphate triphosphohydrolase-like protein.